Reading from the N-terminus, the 216-residue chain is Fucoxanthin-chlorophyll a-c binding protein C, chloroplastic (216 aa).

Residues methionine 1–methionine 38 constitute a chloroplast transit peptide. 3 helical membrane passes run isoleucine 80–leucine 100, isoleucine 121–methionine 141, and glycine 182–proline 202.

It belongs to the fucoxanthin chlorophyll protein family. The LHC complex of chromophytic algae is composed of fucoxanthin, chlorophyll A and C bound non-covalently by fucoxanthin chlorophyll proteins (FCPs). The ratio of pigments in this LHC is; fucoxanthin: chlorophyll C: chlorophyll A; (0.6-1): (0.1-0.3): (1).

The protein resides in the plastid. Its subcellular location is the chloroplast thylakoid membrane. Its function is as follows. The light-harvesting complex (LHC) functions as a light receptor, it captures and delivers excitation energy to photosystems with which it is closely associated. Energy is transferred from the carotenoid and chlorophyll C (or B) to chlorophyll A and the photosynthetic reaction centers where it is used to synthesize ATP and reducing power. The polypeptide is Fucoxanthin-chlorophyll a-c binding protein C, chloroplastic (FCPC) (Macrocystis pyrifera (Giant kelp)).